Consider the following 78-residue polypeptide: Short neurotoxin SNTX14 (78 aa).

Residues 1–21 form the signal peptide; it reads MKTLLLTFLVVTIVCLDLGYT. Cystine bridges form between C24–C40, C33–C58, C62–C70, and C71–C76.

This sequence belongs to the three-finger toxin family. Short-chain subfamily. Expressed by the venom gland.

Its subcellular location is the secreted. Functionally, this three-finger toxin binds and inhibits the nicotinic acetylcholine receptor (nAChR). This Ophiophagus hannah (King cobra) protein is Short neurotoxin SNTX14.